The sequence spans 72 residues: MARVTVEDCLDKVETRFDLVVLASMRANKILKNGYSESMENEKKEKATVVALREIAESEITSEQILRNEIEG.

Belongs to the RNA polymerase subunit omega family. The RNAP catalytic core consists of 2 alpha, 1 beta, 1 beta' and 1 omega subunit. When a sigma factor is associated with the core the holoenzyme is formed, which can initiate transcription.

It catalyses the reaction RNA(n) + a ribonucleoside 5'-triphosphate = RNA(n+1) + diphosphate. Functionally, promotes RNA polymerase assembly. Latches the N- and C-terminal regions of the beta' subunit thereby facilitating its interaction with the beta and alpha subunits. The chain is DNA-directed RNA polymerase subunit omega from Francisella tularensis subsp. holarctica (strain LVS).